The sequence spans 254 residues: tRNA (guanine-N(7)-)-methyltransferase (254 aa).

S-adenosyl-L-methionine is bound by residues Glu82, Glu107, Asp134, and Asp157. Asp157 is a catalytic residue. Substrate is bound by residues Lys161, Asp193, and 233–236 (TKFE).

This sequence belongs to the class I-like SAM-binding methyltransferase superfamily. TrmB family.

The enzyme catalyses guanosine(46) in tRNA + S-adenosyl-L-methionine = N(7)-methylguanosine(46) in tRNA + S-adenosyl-L-homocysteine. It functions in the pathway tRNA modification; N(7)-methylguanine-tRNA biosynthesis. Catalyzes the formation of N(7)-methylguanine at position 46 (m7G46) in tRNA. This is tRNA (guanine-N(7)-)-methyltransferase from Corynebacterium jeikeium (strain K411).